Reading from the N-terminus, the 164-residue chain is Neurotrophin-3 (164 aa).

The signal sequence occupies residues 1-3; the sequence is IQS. The propeptide occupies 4–120; that stretch reads TNMDQQGSLT…ALNRTSRRKR (117 aa). N113 is a glycosylation site (N-linked (GlcNAc...) asparagine).

It belongs to the NGF-beta family.

It localises to the secreted. In terms of biological role, seems to promote the survival of visceral and proprioceptive sensory neurons. The protein is Neurotrophin-3 (NTF3) of Sanzinia madagascariensis (Madagascar tree boa).